The sequence spans 203 residues: Akirin-2 (203 aa).

2 positions are modified to phosphoserine: Ser-18 and Ser-21. Residues 22-27 (PKRRRC) carry the Nuclear localization signal motif. Ser-57 is modified (phosphoserine). Positions 200 to 203 (SYVS) match the SYVS motif motif.

This sequence belongs to the akirin family. In terms of assembly, homodimer. Interacts with IPO9; the interaction is direct. Associates with 20S and 26S proteasomes. Interacts with SMARCD1; promoting SWI/SNF complex recruitment. Interacts with NFKBIZ. Interacts with YWHAB. In terms of processing, polyubiquitinated. Polyubiquitination is dependent of UBR5 that extends pre-ubiquitinated AKIRIN2. In terms of tissue distribution, widely expressed. Most abundant in the lung, followed by the skeletal muscle, heart, liver, fat, thymus, lymph node, small intestine, kidney and spleen. In skeletal muscle, expressed at higher level in fast extensor digitorum longus (EDL) and longissimus lumborum (LL) muscles than in slow soleus (SOL) muscles.

Its subcellular location is the nucleus. The protein localises to the cytoplasm. It is found in the membrane. Its function is as follows. Molecular adapter that acts as a bridge between a variety of multiprotein complexes, and which is involved in embryonic development, immunity, myogenesis and brain development. Plays a key role in nuclear protein degradation by promoting import of proteasomes into the nucleus: directly binds to fully assembled 20S proteasomes at one end and to nuclear import receptor IPO9 at the other end, bridging them together and mediating the import of pre-assembled proteasome complexes through the nuclear pore. Involved in innate immunity by regulating the production of interleukin-6 (IL6) downstream of Toll-like receptor (TLR): acts by bridging the NF-kappa-B inhibitor NFKBIZ and the SWI/SNF complex, leading to promote induction of IL6. Also involved in adaptive immunity by promoting B-cell activation. Involved in brain development: required for the survival and proliferation of cerebral cortical progenitor cells. Involved in myogenesis: required for skeletal muscle formation and skeletal development, possibly by regulating expression of muscle differentiation factors. This chain is Akirin-2, found in Sus scrofa (Pig).